Reading from the N-terminus, the 782-residue chain is Host cell factor homolog hcf-1 (782 aa).

The interval M1–K25 is disordered. Residues R14–K25 are compositionally biased toward basic and acidic residues. Kelch repeat units follow at residues L55–N103, I105–H151, K161–K222, R227–L271, and K280–H324. Phosphoserine occurs at positions 423, 431, and 449. Polar residues predominate over residues S423–K434. The disordered stretch occupies residues S423–W553. Polar residues-rich tracts occupy residues T456–T469 and T496–C513. S498 is modified (phosphoserine). Residues G537–P552 show a composition bias toward acidic residues.

As to quaternary structure, interacts with daf-16/FOXO. Interacts with deacetylase sir-2.1. Interacts with the 14-3-3 family proteins ftt-2 and par-5. Phosphorylated at multiple serine residues. Phosphorylation is developmentally regulated, occurring in embryos but not L1 larvae. Phosphorylation may be cell-cycle-regulated.

Its subcellular location is the nucleus. Transcriptional coregulator. Involved in control of the cell cycle and in modulating mitotic histone phosphorylation. Plays a role in modulating lifespan by regulating the transcriptional activity of daf-16/Forkhead box protein O, in concert with protein deacetylase sir-2.1/SIRT1, and perhaps acting independently of the Insulin/IGF-1-like signaling (IIS) mediated pathway. Negatively modulates responses to environmental stresses, including oxidative stress, heat stress, and exposure to heavy metals; acting via regulation of the transcription factors daf-16 and skn-1. May play a role in pharyngeal development via positive modulation of expression of sup-35. This chain is Host cell factor homolog hcf-1, found in Caenorhabditis elegans.